The primary structure comprises 58 residues: Sodium/potassium-transporting ATPase subunit gamma (58 aa).

Residues 20–39 (NGGLIFAALAFIVGLVIILS) traverse the membrane as a helical segment.

It belongs to the FXYD family. In terms of assembly, regulatory subunit of the sodium/potassium-transporting ATPase which is composed of a catalytic alpha subunit, an auxiliary non-catalytic beta subunit and an additional regulatory subunit. Highest levels expressed in the kidney and spleen. Restricted to the basolateral membrane in renal epithelial cells and varies in its level of expression along the nephron.

The protein resides in the membrane. In terms of biological role, may be involved in forming the receptor site for cardiac glycoside binding or may modulate the transport function of the sodium ATPase. The polypeptide is Sodium/potassium-transporting ATPase subunit gamma (FXYD2) (Bos taurus (Bovine)).